The sequence spans 394 residues: Phosphoglycerate kinase (394 aa).

Residues 21–23, Arg-36, 59–62, Arg-118, and Arg-151 contribute to the substrate site; these read DFN and HLGR. Ser-183 is modified (phosphoserine). Lys-201 is an ATP binding site. Thr-299 is modified (phosphothreonine). ATP is bound by residues Asn-316, Glu-323, and 350 to 353; that span reads GGDS.

This sequence belongs to the phosphoglycerate kinase family. As to quaternary structure, monomer.

It localises to the cytoplasm. It catalyses the reaction (2R)-3-phosphoglycerate + ATP = (2R)-3-phospho-glyceroyl phosphate + ADP. It participates in carbohydrate degradation; glycolysis; pyruvate from D-glyceraldehyde 3-phosphate: step 2/5. The chain is Phosphoglycerate kinase from Geobacillus stearothermophilus (Bacillus stearothermophilus).